Reading from the N-terminus, the 351-residue chain is MSGLIAYCRQGFEPELAAELRDRAVLLGIAGDIHAQRNHGFVLLRCDPLHVDTLLQQLHWRRLIFARQTLRLHAELKTLNSRDRIAPILAALPKTPCFGDLWIEYPDSDMGKPLAGLARSFGNALRPVLRSAGRLSAQLHPQWPRLHVCFLSGDHVLLGSTRSVDSAPWQLGIPRLKLLPEAPSRSALKLEEALITLLTSNEREAKLRPGMRATDLGAAPGGWTWVLIRQHLRVTSIDNAVLRPSLLNHPLVQHVRADGFRWTPPRPMDWMVCDMVEQPRRVAERMAVWLREGWCRHMIFNLKLPMKKRWDETRLCLERFETQAVVPLTLRAKQLYHDREEITVYASNNAR.

S-adenosyl-L-methionine-binding positions include S186, 219–222 (APGG), D238, D258, and D274. K303 acts as the Proton acceptor in catalysis.

The protein belongs to the class I-like SAM-binding methyltransferase superfamily. RNA methyltransferase RlmE family. RlmM subfamily. Monomer.

It is found in the cytoplasm. It carries out the reaction cytidine(2498) in 23S rRNA + S-adenosyl-L-methionine = 2'-O-methylcytidine(2498) in 23S rRNA + S-adenosyl-L-homocysteine + H(+). Functionally, catalyzes the 2'-O-methylation at nucleotide C2498 in 23S rRNA. The chain is Ribosomal RNA large subunit methyltransferase M from Xylella fastidiosa (strain 9a5c).